We begin with the raw amino-acid sequence, 357 residues long: DnaJ homolog subfamily C member 25 (357 aa).

Residues 19-39 (WLLLAPLLLVPLLARPAEALV) form a helical membrane-spanning segment. The 74-residue stretch at 48 to 121 (DCYEVLGVSR…ETRKDYDYML (74 aa)) folds into the J domain. Helical transmembrane passes span 147 to 167 (VVIL…WWNS) and 241 to 261 (LLLF…AWYC).

The protein belongs to the DNAJC25 family.

The protein localises to the membrane. In Mus musculus (Mouse), this protein is DnaJ homolog subfamily C member 25 (Dnajc25).